Consider the following 647-residue polypeptide: Nucleolar GTP-binding protein 1 (647 aa).

An OBG-type G domain is found at 168-340; sequence RTLLICGYPN…VRNKACEKLL (173 aa). GTP is bound by residues 174-181, 220-224, and 288-291; these read GYPNVGKS, DTPGI, and NKTD. Ser-563 is modified (phosphoserine). Residues 594–647 form a disordered region; that stretch reads ADGSMRSKADRMAKMERRERNRHAKQGESDRHNAVSLSKHLFSGKRGVGKTDFR. Residues 598–626 are compositionally biased toward basic and acidic residues; it reads MRSKADRMAKMERRERNRHAKQGESDRHN.

Belongs to the TRAFAC class OBG-HflX-like GTPase superfamily. OBG GTPase family. NOG subfamily. In terms of assembly, associated with nucleolar and cytoplasmic pre-60S particles. Directly interacts with RLP24.

The protein resides in the nucleus. It is found in the nucleolus. Involved in the biogenesis of the 60S ribosomal subunit. This chain is Nucleolar GTP-binding protein 1 (NOG1), found in Saccharomyces cerevisiae (strain ATCC 204508 / S288c) (Baker's yeast).